The primary structure comprises 501 residues: Cell division control protein 24 (501 aa).

In terms of assembly, interacts with dna2, pcn1 and rfc1.

It localises to the nucleus. The protein resides in the cytoplasm. Functionally, has a role in the progression of DNA replication and in the maintenance of genomic integrity. Acts during S phase, after initiation, where it is essential for completion. This chain is Cell division control protein 24 (cdc24), found in Schizosaccharomyces pombe (strain 972 / ATCC 24843) (Fission yeast).